A 252-amino-acid chain; its full sequence is 3-dehydroquinate dehydratase (252 aa).

Residues 46 to 48 (EWR) and Arg-82 each bind 3-dehydroquinate. The active-site Proton donor/acceptor is His-143. Lys-170 acts as the Schiff-base intermediate with substrate in catalysis. Residues Arg-212, Ser-231, and Gln-235 each coordinate 3-dehydroquinate.

Belongs to the type-I 3-dehydroquinase family. In terms of assembly, homodimer.

The enzyme catalyses 3-dehydroquinate = 3-dehydroshikimate + H2O. Its pathway is metabolic intermediate biosynthesis; chorismate biosynthesis; chorismate from D-erythrose 4-phosphate and phosphoenolpyruvate: step 3/7. Involved in the third step of the chorismate pathway, which leads to the biosynthesis of aromatic amino acids. Catalyzes the cis-dehydration of 3-dehydroquinate (DHQ) and introduces the first double bond of the aromatic ring to yield 3-dehydroshikimate. This chain is 3-dehydroquinate dehydratase, found in Listeria innocua serovar 6a (strain ATCC BAA-680 / CLIP 11262).